The primary structure comprises 1889 residues: E3 ubiquitin-protein ligase UBR3 (1889 aa).

Residues 1–27 are disordered; that stretch reads MAAAAAAAAVGDPQPPQPEAPAQGLAL. The UBR-type zinc finger occupies 118 to 189; sequence ALCGLVWTAN…ESGFCRRHQI (72 aa). The tract at residues 338 to 362 is disordered; the sequence is LGQIDSSDEEDQDGSQGLGKRKRVK. Phosphoserine occurs at positions 343 and 344. The next 2 membrane-spanning stretches (helical) occupy residues 761–781 and 919–939; these read MLEGALTFLVILLSLRLHLGM and LLHCKTLHIVLFTLLYKILMD. Residues 1167–1199 are a coiled coil; sequence KKITAAEKKTLDKEERRQKARERQQKLLAEFAS. Ser-1199 carries the post-translational modification Phosphoserine. The segment at 1306–1364 adopts an RING-type; degenerate zinc-finger fold; the sequence is DSSCLLAVSIGWEGGVYVQTCGHTLHIDCHKSYMESLRNDQVLQGFSVDKGEFTCPLCR. Residues 1807–1827 form a helical membrane-spanning segment; sequence QNCGAGTGIFLLINASVIIII.

The protein belongs to the E3 ubiquitin-protein ligase UBR1-like family. As to quaternary structure, interacts with UBE2A and UBE2B. In terms of tissue distribution, expressed in numerous cells of the smell, touch, vision, hearing and taste senses. Expressed in cells of the olfactory pathway, including the olfactory cell layer of the main olfactory epithelium (MOE), a mitral neuron cell layer of the olfactory bulb (OB), and a pyramidal cell layer of the piriform cortex of the olfactory cortex (OC). Expressed in the vomeronasal sensory epithelium of the vomeronasal organ (VNO) and the mitral cells of the accessory olfactory bulb. Expressed in tactile tissues, including the dorsal root ganglion, trigeminal ganglion and follicle-sinus complexes. Expressed in cells between hair follicle and sinus and also in the region of the rete ridge collar. Expressed in taste buds of the fungiform, circumvallate, and foliate papillae. Expressed in the spiral ganglion, the organ of Corti of the cochlea in the inner ear, in the sensory epithelium of macula and vestibular ganglion of the balancing system (at protein level). Expressed in the liver and skeletal muscle.

Its subcellular location is the membrane. The enzyme catalyses S-ubiquitinyl-[E2 ubiquitin-conjugating enzyme]-L-cysteine + [acceptor protein]-L-lysine = [E2 ubiquitin-conjugating enzyme]-L-cysteine + N(6)-ubiquitinyl-[acceptor protein]-L-lysine.. Its pathway is protein modification; protein ubiquitination. Functionally, E3 ubiquitin-protein ligase which is a component of the N-end rule pathway. Does not bind to proteins bearing specific N-terminal residues that are destabilizing according to the N-end rule, leading to their ubiquitination and subsequent degradation. May play a role in Shh signaling by mediating the ubiquitination of Kif7. May be important for MYH9 function in certain tissues, possibly by regulating the ubiquitination of MYH9 and consequently affecting its interaction with MYO7A. The sequence is that of E3 ubiquitin-protein ligase UBR3 (Ubr3) from Mus musculus (Mouse).